Here is a 388-residue protein sequence, read N- to C-terminus: Alanine racemase, catabolic (388 aa).

Lys46 acts as the Proton acceptor; specific for D-alanine in catalysis. Lys46 bears the N6-(pyridoxal phosphate)lysine mark. Residue Arg145 participates in substrate binding. Tyr267 serves as the catalytic Proton acceptor; specific for L-alanine. Met315 serves as a coordination point for substrate.

This sequence belongs to the alanine racemase family. It depends on pyridoxal 5'-phosphate as a cofactor.

The catalysed reaction is L-alanine = D-alanine. Isomerizes L-alanine to D-alanine which is then oxidized to pyruvate by DadA. This chain is Alanine racemase, catabolic (dadB), found in Agrobacterium fabrum (strain C58 / ATCC 33970) (Agrobacterium tumefaciens (strain C58)).